The chain runs to 301 residues: Methionyl-tRNA formyltransferase (301 aa).

109 to 112 contributes to the (6S)-5,6,7,8-tetrahydrofolate binding site; the sequence is SILP.

It belongs to the Fmt family.

It carries out the reaction L-methionyl-tRNA(fMet) + (6R)-10-formyltetrahydrofolate = N-formyl-L-methionyl-tRNA(fMet) + (6S)-5,6,7,8-tetrahydrofolate + H(+). In terms of biological role, attaches a formyl group to the free amino group of methionyl-tRNA(fMet). The formyl group appears to play a dual role in the initiator identity of N-formylmethionyl-tRNA by promoting its recognition by IF2 and preventing the misappropriation of this tRNA by the elongation apparatus. The chain is Methionyl-tRNA formyltransferase from Campylobacter curvus (strain 525.92).